A 426-amino-acid chain; its full sequence is Enolase (426 aa).

(2R)-2-phosphoglycerate is bound at residue Q165. E207 functions as the Proton donor in the catalytic mechanism. Residues D244, E285, and D312 each contribute to the Mg(2+) site. Residues K337, R366, S367, and K388 each contribute to the (2R)-2-phosphoglycerate site. The Proton acceptor role is filled by K337.

This sequence belongs to the enolase family. Requires Mg(2+) as cofactor.

The protein resides in the cytoplasm. It is found in the secreted. The protein localises to the cell surface. It catalyses the reaction (2R)-2-phosphoglycerate = phosphoenolpyruvate + H2O. It functions in the pathway carbohydrate degradation; glycolysis; pyruvate from D-glyceraldehyde 3-phosphate: step 4/5. Catalyzes the reversible conversion of 2-phosphoglycerate (2-PG) into phosphoenolpyruvate (PEP). It is essential for the degradation of carbohydrates via glycolysis. The sequence is that of Enolase from Cyanothece sp. (strain PCC 7425 / ATCC 29141).